A 1064-amino-acid chain; its full sequence is Rab GTPase-activating protein 1 (1064 aa).

A disordered region spans residues 1–101 (MDDKASVGKI…SNQLSASSTI (101 aa)). Positions 7-22 (VGKISVSSDSVSTLNS) are enriched in low complexity. Residue serine 42 is modified to Phosphoserine. The span at 91–101 (LSNQLSASSTI) shows a compositional bias: polar residues. The PID domain maps to 137–293 (EDSVVFNKLT…IFTFSVSLEI (157 aa)). Serine 355 is modified (phosphoserine). The disordered stretch occupies residues 478–520 (RERRKTTASPSVRLPQSGSQSSMIPSPPEDDEEEDNDEPLLSG). Residues 484-501 (TASPSVRLPQSGSQSSMI) are compositionally biased toward polar residues. Acidic residues predominate over residues 505 to 515 (PEDDEEEDNDE). In terms of domain architecture, Rab-GAP TBC spans 561 to 747 (GVPEALRGEV…HIIDLLLCEG (187 aa)). Residues 805-1038 (SQKKLKKFEK…HLGLALSEVQ (234 aa)) adopt a coiled-coil conformation. Phosphothreonine is present on threonine 991.

In terms of assembly, interacts with RAB6A and tubulin gamma.

It is found in the cytoplasm. It localises to the cytosol. Its subcellular location is the cytoskeleton. The protein resides in the microtubule organizing center. The protein localises to the centrosome. In terms of biological role, may act as a GTPase-activating protein of RAB6A. May play a role in microtubule nucleation by centrosome. May participate in a RAB6A-mediated pathway involved in the metaphase-anaphase transition. The sequence is that of Rab GTPase-activating protein 1 from Mus musculus (Mouse).